We begin with the raw amino-acid sequence, 1160 residues long: DNA polymerase III subunit alpha (1160 aa).

It belongs to the DNA polymerase type-C family. DnaE subfamily. In terms of assembly, the DNA polymerase III holoenzyme complex contains at least 10 different subunits organized into 3 functionally essential subassemblies: the Pol III core, the beta sliding clamp processivity factor and the clamp-loading complex. The Pol III core (subunits alpha, epsilon and theta) contains the polymerase and the 3'-5' exonuclease proofreading activities. The polymerase is tethered to the template via the dimeric beta sliding clamp processivity factor. The clamp loader (also called gamma complex) assembles the beta sliding clamp onto the primed template and plays a central role in the organization and communication at the replication fork. The clamp-loading complex contains delta, delta', psi and chi, and 3 copies of either or both of two different DnaX proteins, gamma and tau. The DNA replisome complex has a single clamp loader (3 tau and 1 each of delta, delta', psi and chi subunits) which binds 3 Pol III cores (1 core on the leading strand and 2 on the lagging strand) each with a beta sliding clamp dimer. Additional proteins in the replisome are other copies of gamma, psi and chi, Ssb, DNA helicase and RNA primase. Interacts with the beta sliding-clamp subunit via the peptide Gln-Ala-Asp-Met-Phe (residues 920-924).

It is found in the cytoplasm. The enzyme catalyses DNA(n) + a 2'-deoxyribonucleoside 5'-triphosphate = DNA(n+1) + diphosphate. DNA polymerase III is a complex, multichain enzyme responsible for most of the replicative synthesis in bacteria. This DNA polymerase also exhibits 3' to 5' exonuclease activity. The alpha chain is the DNA polymerase catalytic subunit. It is tethered to replicating DNA by the beta sliding clamp (dnaN), which confers extremely high processivity to the catalytic subunit, copying a 5.4 kb genome in 11 seconds, a speed of at least 500 nucleotides/second at 30 degrees Celsius. The polypeptide is DNA polymerase III subunit alpha (dnaE) (Escherichia coli (strain K12)).